The primary structure comprises 148 residues: ATP synthase epsilon chain (148 aa).

The protein belongs to the ATPase epsilon chain family. In terms of assembly, F-type ATPases have 2 components, CF(1) - the catalytic core - and CF(0) - the membrane proton channel. CF(1) has five subunits: alpha(3), beta(3), gamma(1), delta(1), epsilon(1). CF(0) has three main subunits: a, b and c.

The protein localises to the cell membrane. Produces ATP from ADP in the presence of a proton gradient across the membrane. This Streptococcus thermophilus (strain ATCC BAA-491 / LMD-9) protein is ATP synthase epsilon chain.